A 131-amino-acid chain; its full sequence is MRHRKSGRQLNRNSSHRQAMFRNMACSIVRHEIIKTTVAKAKELRRVVEPLITLAKVDSVANRRLAFARTRDAEVVGKLFTELGPRFQERPGGYTRILKCGLRTGDKAPMAYIELVGRPEAAEAVEVEAAE.

This sequence belongs to the bacterial ribosomal protein bL17 family. Part of the 50S ribosomal subunit. Contacts protein L32.

The sequence is that of Large ribosomal subunit protein bL17 from Shewanella frigidimarina (strain NCIMB 400).